The primary structure comprises 332 residues: Palmitoyltransferase PFA3 (332 aa).

The Cytoplasmic segment spans residues Met1–Arg13. Residues Cys14–Ile34 traverse the membrane as a helical segment. The Lumenal segment spans residues Arg35 to Arg37. The helical transmembrane segment at Val38–Ile58 threads the bilayer. Over Tyr59–Lys147 the chain is Cytoplasmic. Residues Arg104 to Ile154 form the DHHC domain. Residues Phe148–Ser168 traverse the membrane as a helical segment. Topologically, residues Met169–Thr188 are lumenal. The helical transmembrane segment at Leu189–Phe209 threads the bilayer. The Cytoplasmic portion of the chain corresponds to Ser210–Val332.

This sequence belongs to the DHHC palmitoyltransferase family. PFA3 subfamily. Post-translationally, autopalmitoylated.

It is found in the vacuole membrane. It carries out the reaction L-cysteinyl-[protein] + hexadecanoyl-CoA = S-hexadecanoyl-L-cysteinyl-[protein] + CoA. In terms of biological role, palmitoyltransferase specific for VAC8. Palmitoylates VAC8 at one or more of its N-terminal cysteine residues, which is required for its proper membrane localization. The sequence is that of Palmitoyltransferase PFA3 (PFA3) from Candida glabrata (strain ATCC 2001 / BCRC 20586 / JCM 3761 / NBRC 0622 / NRRL Y-65 / CBS 138) (Yeast).